A 521-amino-acid polypeptide reads, in one-letter code: Ribonuclease Y 1 (521 aa).

A helical transmembrane segment spans residues Met1–Ile21. Residues Ile51 to Gln87 are disordered. Residues Thr211 to Ile271 form the KH domain. The region spanning Ala337 to Ser430 is the HD domain.

It belongs to the RNase Y family.

It localises to the cell membrane. Its function is as follows. Endoribonuclease that initiates mRNA decay. This is Ribonuclease Y 1 from Bdellovibrio bacteriovorus (strain ATCC 15356 / DSM 50701 / NCIMB 9529 / HD100).